A 413-amino-acid chain; its full sequence is Arginine biosynthesis bifunctional protein ArgJ (413 aa).

Positions 163, 189, 200, 286, 408, and 413 each coordinate substrate. Thr200 (nucleophile) is an active-site residue.

The protein belongs to the ArgJ family. Heterotetramer of two alpha and two beta chains.

The protein localises to the cytoplasm. The enzyme catalyses N(2)-acetyl-L-ornithine + L-glutamate = N-acetyl-L-glutamate + L-ornithine. The catalysed reaction is L-glutamate + acetyl-CoA = N-acetyl-L-glutamate + CoA + H(+). It participates in amino-acid biosynthesis; L-arginine biosynthesis; L-ornithine and N-acetyl-L-glutamate from L-glutamate and N(2)-acetyl-L-ornithine (cyclic): step 1/1. It functions in the pathway amino-acid biosynthesis; L-arginine biosynthesis; N(2)-acetyl-L-ornithine from L-glutamate: step 1/4. Functionally, catalyzes two activities which are involved in the cyclic version of arginine biosynthesis: the synthesis of N-acetylglutamate from glutamate and acetyl-CoA as the acetyl donor, and of ornithine by transacetylation between N(2)-acetylornithine and glutamate. This chain is Arginine biosynthesis bifunctional protein ArgJ, found in Staphylococcus aureus (strain Mu50 / ATCC 700699).